The chain runs to 381 residues: p55-v-Fos-transforming protein (381 aa).

Residues 137–200 (EEKRRIRRER…EKLEFILAAH (64 aa)) form the bZIP domain. The interval 139 to 159 (KRRIRRERNKMAAAKCRNRRR) is basic motif. The leucine-zipper stretch occupies residues 165–193 (LQAETDQLEDKKSALQTEIANLLKEKEKL).

This sequence belongs to the bZIP family. Fos subfamily.

The protein localises to the host nucleus. The polypeptide is p55-v-Fos-transforming protein (V-FOS) (Mus musculus (Mouse)).